The following is a 446-amino-acid chain: Tol-Pal system protein TolB (446 aa).

The first 19 residues, 1–19 (MLLRYLFILFIIIPIKAFA), serve as a signal peptide directing secretion.

Belongs to the TolB family. In terms of assembly, the Tol-Pal system is composed of five core proteins: the inner membrane proteins TolA, TolQ and TolR, the periplasmic protein TolB and the outer membrane protein Pal. They form a network linking the inner and outer membranes and the peptidoglycan layer.

The protein resides in the periplasm. In terms of biological role, part of the Tol-Pal system, which plays a role in outer membrane invagination during cell division and is important for maintaining outer membrane integrity. The sequence is that of Tol-Pal system protein TolB from Pelagibacter ubique (strain HTCC1062).